A 984-amino-acid chain; its full sequence is Glutamate [NMDA] receptor subunit 1 (984 aa).

The signal sequence occupies residues 1 to 24 (MAAAFAYRWLLCAAGIVNVLPIGA). The Extracellular portion of the chain corresponds to 25 to 570 (QRHTASDNPS…TLVSFLQPFS (546 aa)). Asn255, Asn311, Asn342, Asn394, Asn451, Asn478, and Asn498 each carry an N-linked (GlcNAc...) asparagine glycan. Residues 527–529 (PLT) and Arg534 each bind glycine. The helical transmembrane segment at 571–591 (NTLWILVMVSVHVVALVLYLL) threads the bilayer. Residues 592 to 648 (DRFSPFGRFKLSHSDSNEEKALNLSSAVWFAWGVLLNSGIGEGTPRSFSARVLGMVW) lie on the Cytoplasmic side of the membrane. A helical transmembrane segment spans residues 649-669 (AGFAMIIVASYTANLAAFLVL). Over 670-828 (ERPKTKLSGI…KTPNTLGLKN (159 aa)) the chain is Extracellular. Asn690 carries N-linked (GlcNAc...) asparagine glycosylation. The glycine site is built by Ser700 and Asp744. A helical transmembrane segment spans residues 829–849 (MAGVFILVGVGIAGGVGLIII). The Cytoplasmic portion of the chain corresponds to 850 to 984 (EVIYKKHQVK…YTSDVSHLVV (135 aa)). A disordered region spans residues 947–984 (KSGLVPPALGLGKTRPQQNPLPPRYSPGYTSDVSHLVV). Positions 974–984 (GYTSDVSHLVV) are enriched in polar residues.

This sequence belongs to the glutamate-gated ion channel (TC 1.A.10.1) family. Forms a heteromeric NMDA channel with Nmdar2.

Its subcellular location is the cell membrane. The protein resides in the postsynaptic cell membrane. It localises to the postsynaptic density. Functionally, NMDA receptor subtype of glutamate-gated ion channels with high calcium permeability and voltage-dependent sensitivity to magnesium. Mediated by glycine. This protein plays a key role in synaptic plasticity, synaptogenesis, excitotoxicity, memory acquisition and learning. It mediates neuronal functions in glutamate neurotransmission. Is involved in the cell surface targeting of NMDA receptors. Plays a role in associative learning and in long-term memory consolidation. The protein is Glutamate [NMDA] receptor subunit 1 of Drosophila virilis (Fruit fly).